The chain runs to 200 residues: Chromophore lyase CpcT/CpeT 2 (200 aa).

It belongs to the CpcT/CpeT biliprotein lyase family.

In terms of biological role, covalently attaches a chromophore to Cys residue(s) of phycobiliproteins. The protein is Chromophore lyase CpcT/CpeT 2 of Microcystis aeruginosa (strain NIES-843 / IAM M-2473).